The following is an 84-amino-acid chain: Cytochrome b559 subunit alpha (84 aa).

The helical transmembrane segment at 24-38 threads the bilayer; it reads IIHAVTLPAIFIAGF. H26 contacts heme.

This sequence belongs to the PsbE/PsbF family. Heterodimer of an alpha subunit and a beta subunit. PSII is composed of 1 copy each of membrane proteins PsbA, PsbB, PsbC, PsbD, PsbE, PsbF, PsbH, PsbI, PsbJ, PsbK, PsbL, PsbM, PsbT, PsbX, PsbY, Psb30/Ycf12, peripheral proteins PsbO, CyanoQ (PsbQ), PsbU, PsbV and a large number of cofactors. It forms dimeric complexes. The cofactor is heme b.

It is found in the cellular thylakoid membrane. Functionally, this b-type cytochrome is tightly associated with the reaction center of photosystem II (PSII). PSII is a light-driven water:plastoquinone oxidoreductase that uses light energy to abstract electrons from H(2)O, generating O(2) and a proton gradient subsequently used for ATP formation. It consists of a core antenna complex that captures photons, and an electron transfer chain that converts photonic excitation into a charge separation. The protein is Cytochrome b559 subunit alpha of Prochlorococcus marinus (strain MIT 9301).